We begin with the raw amino-acid sequence, 135 residues long: Large ribosomal subunit protein uL16c (135 aa).

It belongs to the universal ribosomal protein uL16 family. As to quaternary structure, part of the 50S ribosomal subunit.

Its subcellular location is the plastid. The protein resides in the chloroplast. This chain is Large ribosomal subunit protein uL16c, found in Nandina domestica (Heavenly bamboo).